Here is a 113-residue protein sequence, read N- to C-terminus: Con-Ins G3b (113 aa).

Residues 1–21 (MTTSFYFLLVALGLLLYVCQS) form the signal peptide. Positions 22–29 (SFGNQHTR) are excised as a propeptide. Pro-34 is modified (4-hydroxyproline; partial). Cystine bridges form between Cys-38–Cys-99, Cys-50–Cys-112, and Cys-98–Cys-103. Glu-41 carries the 4-carboxyglutamate modification. His-51 carries the histidine amide modification. A propeptide spans 52 to 92 (GKRNDAGKKRGRASPLWQRQGFLSMLKAKRNEAFFLQRDGR) (c peptide). 4-carboxyglutamate is present on Glu-96. At Pro-102 the chain carries 4-hydroxyproline; partial.

The protein belongs to the insulin family. As to quaternary structure, heterodimer of A and B chains; disulfide-linked. In terms of processing, it is noteworthy that in this dimer, in contrast to Con-Ins G1, the chain B is amidated and not the chain A. Expressed by the venom gland.

The protein resides in the secreted. Functionally, this venom insulin, from a fish-hunting cone snail, facilitates prey capture by rapidly inducing hypoglycemic shock. It is one of the smallest known insulin found in nature and lacks the C-terminal segment of the B chain that, in human insulin, mediates engagement of the insulin receptor (INSR) and assembly of the hormone's hexameric storage form. Despite lacking this segment, it both binds and activates human insulin receptor (long isoform (HIR-B)) with only a 10-fold lower potency. In vivo, intraperitoneal injection of this peptide into zebrafish lowers blood glucose with the same potency than human insulin. In addition, when applied to water, this peptide reduces overall locomotor activity of zebrafish larvae, observed as a significant decrease in the percentage of time spent swimming and movement frequency. This is Con-Ins G3b from Conus geographus (Geography cone).